A 167-amino-acid polypeptide reads, in one-letter code: Lipoprotein signal peptidase (167 aa).

A run of 4 helical transmembrane segments spans residues 5 to 25 (ICSTGLRWLWLVVVVLILDLG), 42 to 62 (LIPYFNLTYAQNFGAAFSFLA), 70 to 90 (WFFAFIAVAISVVLMVMMYRA), and 102 to 122 (ALIIGGALGNLFDRLVHGFVI). Residues D123 and D141 contribute to the active site. A helical transmembrane segment spans residues 137–157 (FNIADMAICIGAGLVIIDSFL).

This sequence belongs to the peptidase A8 family.

It localises to the cell inner membrane. The catalysed reaction is Release of signal peptides from bacterial membrane prolipoproteins. Hydrolyzes -Xaa-Yaa-Zaa-|-(S,diacylglyceryl)Cys-, in which Xaa is hydrophobic (preferably Leu), and Yaa (Ala or Ser) and Zaa (Gly or Ala) have small, neutral side chains.. It participates in protein modification; lipoprotein biosynthesis (signal peptide cleavage). Its function is as follows. This protein specifically catalyzes the removal of signal peptides from prolipoproteins. This is Lipoprotein signal peptidase from Photorhabdus laumondii subsp. laumondii (strain DSM 15139 / CIP 105565 / TT01) (Photorhabdus luminescens subsp. laumondii).